A 258-amino-acid polypeptide reads, in one-letter code: UPF0246 protein Pnap_3166 (258 aa).

This sequence belongs to the UPF0246 family.

The chain is UPF0246 protein Pnap_3166 from Polaromonas naphthalenivorans (strain CJ2).